The sequence spans 537 residues: MKLIFLLLLFGVSPIVCQDFEDGVFLAKITSIDEHDARKIGRRFGFEAQWKLQSYTDVYVGRRLRRRKRGIEDEIVAEMMLSQQVQFIEKLQGFRRYKRAPMTNKGYPVHVWNLTPSLYIREAWEDGFNASRVTVAVVDDGVDIKHVDLKSAFSPRVSFDFVRFGDLPTPKNSKEFEHGTQCAGLVAMEGQQCGLGVGHGATLGAIKLLGQDFLNDALEGDALAFQKDLIDIYSVSWGPKDDGKSAEKPAKFTEEAIKNGALHGRNGKGNIFVWASGNGGVNGDNCAYDGYVSNEYTLSFGVIDASGAPAAYGEGCSSVLAAVSGGDAMIQTTGLESTCSSISGSSASAAIASGIISLVLDANPTLSQRDIQHLIARTSNASAIRDVELYENSAGLNFHPKVGFGLLNAQKLVVMAATWENVAPQVTCEKMNLANGIIDNSDCDVTKVERVIVSGSIIHPHRGQVQIRLESPRGTISELLPLRPKDTSRDLLDWNFVSVNFFGENSRGIWKLHVTSEEDDVDFRVEMKMFKVVGTMS.

The first 17 residues, 1-17 (MKLIFLLLLFGVSPIVC), serve as a signal peptide directing secretion. The propeptide occupies 18-99 (QDFEDGVFLA…KLQGFRRYKR (82 aa)). In terms of domain architecture, Peptidase S8 spans 111 to 413 (VWNLTPSLYI…FGLLNAQKLV (303 aa)). The N-linked (GlcNAc...) asparagine glycan is linked to N129. Catalysis depends on charge relay system residues D139 and H178. C286 and C316 are joined by a disulfide. The active-site Charge relay system is S346. N-linked (GlcNAc...) asparagine glycosylation occurs at N380. The 131-residue stretch at 407-537 (LNAQKLVVMA…KMFKVVGTMS (131 aa)) folds into the P/Homo B domain.

Belongs to the peptidase S8 family. Furin subfamily.

Its subcellular location is the secreted. Probable serine endoprotease which cleaves preproteins at paired basic amino acids. May process FMRFamide-like (flp) and neuropeptide-like protein (nlp) neuropeptides. In muscles, involved in neuronal retrograde signaling by regulating presynaptic activity and localization of synaptic vesicle fusion protein unc-13 at the neuromuscular junction (NMJ). Acts in the intestine to regulate anterior body muscle contractions (aBOC) and the expulsion steps during the defecation motor program (DMP). Probably by regulating DMP, required for fatty acid uptake by intestinal cells and therefore regulates the levels of triglycerides in the intestine. Plays a role in locomotion. The sequence is that of Endoprotease aex-5 from Caenorhabditis elegans.